The primary structure comprises 378 residues: Transmembrane 6 superfamily member 2 (378 aa).

A run of 10 helical transmembrane segments spans residues 10–30, 34–54, 63–83, 110–130, 140–160, 170–190, 219–239, 269–289, 291–311, and 332–352; these read TVAM…VSAF, LFVV…VYSL, PLYA…VIAL, IFIC…MAGA, LGLY…PGNI, PTFF…VRIF, LALI…GLVV, MLMY…ALAF, GCSW…QAQF, and TWAT…LLAF. 2 consecutive EXPERA domains span residues 61–186 and 217–351; these read YDPL…CWAG and ADLA…HLLA.

It belongs to the TM6SF family. Highly expressed in the liver at both the mRNA and protein levels.

It is found in the endoplasmic reticulum membrane. The protein localises to the endoplasmic reticulum-Golgi intermediate compartment membrane. Functionally, regulator of liver fat metabolism influencing triglyceride secretion and hepatic lipid droplet content. May function as sterol isomerase. In Mus musculus (Mouse), this protein is Transmembrane 6 superfamily member 2 (Tm6sf2).